A 113-amino-acid chain; its full sequence is Dolichyl-diphosphooligosaccharide--protein glycosyltransferase subunit DAD1 (113 aa).

Ser-2 is subject to N-acetylserine. At 2–30 (SASVVSVISRFLEEYLSSTPQRLKLLDAY) the chain is on the cytoplasmic side. A helical transmembrane segment spans residues 31–51 (LLYILLTGALQFGYCLLVGTF). Position 52 (Pro-52) is a topological domain, lumenal. Residues 53-73 (FNSFLSGFISCVGSFILAVRL) form a helical membrane-spanning segment. Over 74-92 (RIQINPQNKADFQGISPER) the chain is Cytoplasmic. A helical transmembrane segment spans residues 93–113 (AFADFLFASTILHLVVMNFVG).

Belongs to the DAD/OST2 family. In terms of assembly, component of the oligosaccharyltransferase (OST) complex. OST exists in two different complex forms which contain common core subunits RPN1, RPN2, OST48, OST4, DAD1 and TMEM258, either STT3A or STT3B as catalytic subunits, and form-specific accessory subunits. STT3A complex assembly occurs through the formation of 3 subcomplexes. Subcomplex 1 contains RPN1 and TMEM258, subcomplex 2 contains the STT3A-specific subunits STT3A, DC2/OSTC, and KCP2 as well as the core subunit OST4, and subcomplex 3 contains RPN2, DAD1, and OST48. The STT3A complex can form stable complexes with the Sec61 complex or with both the Sec61 and TRAP complexes.

It is found in the endoplasmic reticulum membrane. It functions in the pathway protein modification; protein glycosylation. In terms of biological role, subunit of the oligosaccharyl transferase (OST) complex that catalyzes the initial transfer of a defined glycan (Glc(3)Man(9)GlcNAc(2) in eukaryotes) from the lipid carrier dolichol-pyrophosphate to an asparagine residue within an Asn-X-Ser/Thr consensus motif in nascent polypeptide chains, the first step in protein N-glycosylation. N-glycosylation occurs cotranslationally and the complex associates with the Sec61 complex at the channel-forming translocon complex that mediates protein translocation across the endoplasmic reticulum (ER). All subunits are required for a maximal enzyme activity. In Pongo abelii (Sumatran orangutan), this protein is Dolichyl-diphosphooligosaccharide--protein glycosyltransferase subunit DAD1.